Reading from the N-terminus, the 252-residue chain is Cysteine-rich repeat secretory protein 38 (252 aa).

The first 27 residues, 1–27, serve as a signal peptide directing secretion; it reads MSSLKRIVWFPILAIAIQILSIHTVLS. Gnk2-homologous domains are found at residues 34-136 and 142-248; these read FLFH…STNF and FENR…IYPF.

The protein belongs to the cysteine-rich repeat secretory protein family.

The protein resides in the secreted. In Arabidopsis thaliana (Mouse-ear cress), this protein is Cysteine-rich repeat secretory protein 38 (CRRSP38).